Here is a 551-residue protein sequence, read N- to C-terminus: MRLDVVSKAARAAQRFSAQCHGQKFRTAHASATLRAALAVEASEANQKGRSAGLLAAMALMGVAGVASMDDNAAAKCEGAAKPVSREAVTQAMLKEVVTKLNRIESAVANPHRHTDGLNVGVDVVLGAQWGDEGKGKLVDSLSQSYDVIVRVAGGSNAGHTIVHEGKKYKFHLVPSGILNPNAICIIGNGVVVHLPSFLEELEELKRMGVDYEGRILISDRAHMVLDLHQEVDGINELRRGRNKIGTTKKGIGPAYSSKMLRNGVRVGDLRYFDDFTEKMVDLVKFYKDNYPELEADAEAEIKVYSDMKDKILDMTVDTVSYLNNAYVAGKKILVEGANATMLDIDFGTYPYVTSSNPSIGSVCTGGGISPNRLNGIIGIVKAYCTRVGEGPFPTELHDDVGEHLGTVGAEFGTTTGRARRCGWLDIPQMRYSNMVNGFTELNLTKLDVLTGLKKVKIGVAYWHEGKKLDGMPSNLQLLQDSVVEYEEMEGWSEDISKCKTFEELPVAAQKYVLRVEELLGTHIKWIGVGPDRFDVITRTHPLEKAYISGN.

Residues 131-137 (GDEGKGK) and 159-161 (GHT) each bind GTP. Aspartate 132 acts as the Proton acceptor in catalysis. Mg(2+) contacts are provided by aspartate 132 and glycine 159. IMP is bound by residues 132 to 135 (DEGK), 157 to 160 (NAGH), threonine 248, arginine 262, asparagine 339, threonine 354, and arginine 418. Residue histidine 160 is the Proton donor of the active site. 414–420 (TTTGRAR) contacts substrate. GTP-binding positions include arginine 420, 446-448 (KLD), and 528-530 (GVG).

Belongs to the adenylosuccinate synthetase family. In terms of assembly, homodimer. Mg(2+) is required as a cofactor.

The protein localises to the cytoplasm. It catalyses the reaction IMP + L-aspartate + GTP = N(6)-(1,2-dicarboxyethyl)-AMP + GDP + phosphate + 2 H(+). Its pathway is purine metabolism; AMP biosynthesis via de novo pathway; AMP from IMP: step 1/2. In terms of biological role, plays an important role in the de novo pathway and in the salvage pathway of purine nucleotide biosynthesis. Catalyzes the first committed step in the biosynthesis of AMP from IMP. This Phytophthora infestans (strain T30-4) (Potato late blight agent) protein is Adenylosuccinate synthetase.